The sequence spans 884 residues: DNA replication licensing factor mcm2 (884 aa).

Residues 1–16 are compositionally biased toward polar residues; that stretch reads MADSSESFNIATSPRT. Disordered stretches follow at residues 1–61 and 120–151; these read MADS…IGDA and LYDS…EDEE. Positions 47–58 are enriched in acidic residues; it reads PREEEEDGEELI. The C4-type zinc finger occupies 314-340; that stretch reads CNKCNFILGPFFQSQNQEVKPGSCPEC. The 207-residue stretch at 458 to 664 folds into the MCM domain; the sequence is IGERIFASIA…VQDEMLARFV (207 aa). Ser-515 and Gln-516 together coordinate ADP. The Arginine finger signature appears at 640–643; that stretch reads SRFD.

It belongs to the MCM family. In terms of assembly, component of the mcm2-7 complex (RLF-M). The complex forms a toroidal hexameric ring with the proposed subunit order mcm2-mcm6-mcm4-mcm7-mcm3-mcm5. Component of the replisome complex. Component of the CMG helicase complex, composed of the mcm2-7 complex, the GINS complex and cdc45. Post-translationally, may be in a phosphorylated state in the mitotic mcm complex. Phosphorylated in the interphase mcm complex. Phosphorylated by the cdc7-dbf4 and cdc7-dbf4b complexes.

The protein resides in the nucleus. It is found in the chromosome. The enzyme catalyses ATP + H2O = ADP + phosphate + H(+). In terms of biological role, acts as a component of the MCM2-7 complex (MCM complex) which is the replicative helicase essential for 'once per cell cycle' DNA replication initiation and elongation in eukaryotic cells. Core component of CDC45-MCM-GINS (CMG) helicase, the molecular machine that unwinds template DNA during replication, and around which the replisome is built. The active ATPase sites in the MCM2-7 ring are formed through the interaction surfaces of two neighboring subunits such that a critical structure of a conserved arginine finger motif is provided in trans relative to the ATP-binding site of the Walker A box of the adjacent subunit. The six ATPase active sites, however, are likely to contribute differentially to the complex helicase activity. Required for the entry in S phase and for cell division. This is DNA replication licensing factor mcm2 from Xenopus tropicalis (Western clawed frog).